A 171-amino-acid chain; its full sequence is Sec-independent protein translocase protein TatB (171 aa).

A helical membrane pass occupies residues 1 to 21; the sequence is MFDIGFSELLLVFIIGLVVLG. Residues 117–171 are disordered; it reads KDNEAAHEGVTPAAAQTQASSPEQKPETTPEPVVKPAADAEPKTAAPSPSSSDKP. Residues 130 to 139 show a composition bias toward polar residues; it reads AAQTQASSPE.

The protein belongs to the TatB family. As to quaternary structure, the Tat system comprises two distinct complexes: a TatABC complex, containing multiple copies of TatA, TatB and TatC subunits, and a separate TatA complex, containing only TatA subunits. Substrates initially bind to the TatABC complex, which probably triggers association of the separate TatA complex to form the active translocon.

The protein resides in the cell inner membrane. In terms of biological role, part of the twin-arginine translocation (Tat) system that transports large folded proteins containing a characteristic twin-arginine motif in their signal peptide across membranes. Together with TatC, TatB is part of a receptor directly interacting with Tat signal peptides. TatB may form an oligomeric binding site that transiently accommodates folded Tat precursor proteins before their translocation. This is Sec-independent protein translocase protein TatB from Escherichia coli O157:H7.